A 265-amino-acid chain; its full sequence is Glutamate racemase (265 aa).

Substrate is bound by residues 7–8 (DS) and 39–40 (YG). The Proton donor/acceptor role is filled by Cys70. Residue 71–72 (NT) coordinates substrate. Cys179 serves as the catalytic Proton donor/acceptor. 180-181 (TH) serves as a coordination point for substrate.

Belongs to the aspartate/glutamate racemases family.

It catalyses the reaction L-glutamate = D-glutamate. The protein operates within cell wall biogenesis; peptidoglycan biosynthesis. Its function is as follows. Provides the (R)-glutamate required for cell wall biosynthesis. The chain is Glutamate racemase from Gloeobacter violaceus (strain ATCC 29082 / PCC 7421).